The following is a 97-amino-acid chain: MGIPNLTKGDAMRAAKHYRQLLSIDFNIEALAFVPGPDGTRGRRIHVLGREVRDRPGLVEYLSPAFGSRVALDGYCKANFDAVLHLAYPDHQQWGHA.

This is Protein ParC (parC) from Escherichia coli.